Reading from the N-terminus, the 465-residue chain is UDP-N-acetylmuramate--L-alanine ligase (465 aa).

115–121 (GAHGKTT) is a binding site for ATP.

It belongs to the MurCDEF family.

It is found in the cytoplasm. It carries out the reaction UDP-N-acetyl-alpha-D-muramate + L-alanine + ATP = UDP-N-acetyl-alpha-D-muramoyl-L-alanine + ADP + phosphate + H(+). It participates in cell wall biogenesis; peptidoglycan biosynthesis. Functionally, cell wall formation. The sequence is that of UDP-N-acetylmuramate--L-alanine ligase from Coxiella burnetii (strain CbuG_Q212) (Coxiella burnetii (strain Q212)).